The chain runs to 204 residues: Phosphoribosyl-dephospho-CoA transferase (204 aa).

Active-site residues include Asp-129 and Asp-131.

Belongs to the MdcG family.

It catalyses the reaction apo-[malonate decarboxylase ACP] + 2'-(5''-triphospho-alpha-D-ribosyl)-3'-dephospho-CoA = holo-[malonate decarboxylase ACP] + diphosphate. Transfers 2'-(5-triphosphoribosyl)-3'-dephosphocoenzyme-A to the apo-[acyl-carrier-protein] of the malonate decarboxylase to yield holo-[acyl-carrier-protein]. The protein is Phosphoribosyl-dephospho-CoA transferase of Pseudomonas putida (strain GB-1).